Reading from the N-terminus, the 273-residue chain is Putative pyruvate, phosphate dikinase regulatory protein (273 aa).

Residue 153–160 (GISRTSKT) coordinates ADP.

It belongs to the pyruvate, phosphate/water dikinase regulatory protein family. PDRP subfamily.

The enzyme catalyses N(tele)-phospho-L-histidyl/L-threonyl-[pyruvate, phosphate dikinase] + ADP = N(tele)-phospho-L-histidyl/O-phospho-L-threonyl-[pyruvate, phosphate dikinase] + AMP + H(+). It carries out the reaction N(tele)-phospho-L-histidyl/O-phospho-L-threonyl-[pyruvate, phosphate dikinase] + phosphate + H(+) = N(tele)-phospho-L-histidyl/L-threonyl-[pyruvate, phosphate dikinase] + diphosphate. Functionally, bifunctional serine/threonine kinase and phosphorylase involved in the regulation of the pyruvate, phosphate dikinase (PPDK) by catalyzing its phosphorylation/dephosphorylation. The chain is Putative pyruvate, phosphate dikinase regulatory protein from Rhizobium leguminosarum bv. trifolii (strain WSM2304).